The primary structure comprises 78 residues: Gas vesicle protein A (78 aa).

Residues L9–K19 form an alpha helix 1 region. The segment at V23–L31 is beta-strand 1. Residues V32–I34 are beta turn. Positions E35–V43 are beta-strand 2. The segment at V48–T67 is alpha helix 2.

It belongs to the gas vesicle GvpA family. The gas vesicle shell is 2 nm thick and consists of a single layer of this protein. It forms helical ribs nearly perpendicular to the long axis of the vesicle. Modeled as antiparallel homodimers.

The protein localises to the gas vesicle shell. Its function is as follows. Gas vesicles are hollow, gas filled proteinaceous nanostructures found in some microorganisms. During planktonic growth they allow positioning of the organism at a favorable depth for light or nutrient acquisition. GvpA forms the protein shell. This gene replaces p-gvpA of H.salinarum very poorly, only about 1% of GVs are formed; the few gas vesicles formed are quite strong with a very high critical collapse pressure (CCP) of 0.213 MPa. In terms of biological role, expression of a 9.5 kb mc-vac DNA fragment containing 2 divergently transcribed regions (gvpD-gvpE-gvpF-gvpG-gvpH-gvpI-gvpJ-gvpK-gvpL-gvpM and gvpA-gvpC-gvpN-gvpO) allows H.volcanii to produce gas vesicles. This chain is Gas vesicle protein A, found in Haloferax mediterranei (strain ATCC 33500 / DSM 1411 / JCM 8866 / NBRC 14739 / NCIMB 2177 / R-4) (Halobacterium mediterranei).